The primary structure comprises 1529 residues: ATP-dependent permease PDR15 (1529 aa).

The segment covering 1–13 (MSSDIRDVEERNS) has biased composition (basic and acidic residues). Residues 1–38 (MSSDIRDVEERNSRSSSSSSSSNSAAQSIGQHPYRGFD) form a disordered region. At 1-531 (MSSDIRDVEE…NFWRMKQSAS (531 aa)) the chain is on the cytoplasmic side. Positions 14–24 (RSSSSSSSSNS) are enriched in low complexity. In terms of domain architecture, ABC transporter 1 spans 171–420 (LRLLKPSKEE…FQDMGYYCPP (250 aa)). Residues 532 to 552 (VTLWQVIGNSVMAFILGSMFY) traverse the membrane as a helical segment. Residues 553 to 567 (KVMKKNDTSTFYFRG) lie on the Extracellular side of the membrane. Residue Asn558 is glycosylated (N-linked (GlcNAc...) asparagine). The helical transmembrane segment at 568 to 588 (AAMFFAILFNAFSCLLEIFSL) threads the bilayer. Over 589–617 (YETRPITEKHRTYSLYHPSADAFASVLSE) the chain is Cytoplasmic. The helical transmembrane segment at 618–638 (MPPKLITAVCFNIIFYFLVDF) threads the bilayer. The Extracellular portion of the chain corresponds to 639–642 (RRNG). A helical membrane pass occupies residues 643-663 (GVFFFYFLINVIATFTLSHLF). Over 664–699 (RCVGSLTKTLQEAMVPASMLLLAISMYTGFAIPKTK) the chain is Cytoplasmic. The chain crosses the membrane as a helical span at residues 700 to 720 (ILGWSIWIWYINPLAYLFESL). The Extracellular segment spans residues 721–783 (MINEFHDRRF…YDYEHKHKWR (63 aa)). Asn744 carries an N-linked (GlcNAc...) asparagine glycan. The helical transmembrane segment at 784-804 (GFGIGMAYVVFFFFVYLILCE) threads the bilayer. The Cytoplasmic portion of the chain corresponds to 805–1219 (YNEGAKQKGE…LFQQYWRSPD (415 aa)). The span at 829 to 840 (EGKLQEKHRPGD) shows a compositional bias: basic and acidic residues. Positions 829–873 (EGKLQEKHRPGDIENNAGSSPDSATTEKKILDDSSEGSDSSSDNA) are disordered. An ABC transporter 2 domain is found at 884 to 1127 (FHWRDLCYDV…MIDYFESKGA (244 aa)). 920 to 927 (GASGAGKT) serves as a coordination point for ATP. A helical transmembrane segment spans residues 1220–1240 (YLWSKFILTIFNQVFIGFTFF). Residues 1241-1312 (KADRSLQGLQ…VEIPWNILAG (72 aa)) lie on the Extracellular side of the membrane. Residues 1313–1333 (TIAYCIYYYAVGFYANASAAG) form a helical membrane-spanning segment. The Cytoplasmic portion of the chain corresponds to 1334–1340 (QLHERGA). The chain crosses the membrane as a helical span at residues 1341 to 1361 (LFWLFSIAFYVYIGSMGLLMI). The Extracellular portion of the chain corresponds to 1362 to 1368 (SFNEVAE). The helical transmembrane segment at 1369-1389 (TAAHMGTLLFTMALSFCGVMA) threads the bilayer. Residues 1390–1396 (TPKVMPR) are Cytoplasmic-facing. Residues 1397-1417 (FWIFMYRVSPLTYMIDALLAL) form a helical membrane-spanning segment. Topologically, residues 1418–1492 (GVANVDVKCS…SSHYYRRWRN (75 aa)) are extracellular. The chain crosses the membrane as a helical span at residues 1493–1513 (YGIFICYIAFDYIAATFLYWL). The Cytoplasmic portion of the chain corresponds to 1514–1529 (SRVPKKNGKISEKPKK).

It belongs to the ABC transporter superfamily. ABCG family. PDR (TC 3.A.1.205) subfamily.

Its subcellular location is the membrane. The sequence is that of ATP-dependent permease PDR15 (PDR15) from Saccharomyces cerevisiae (strain ATCC 204508 / S288c) (Baker's yeast).